Consider the following 282-residue polypeptide: Putative peroxisomal biogenesis factor 19 (282 aa).

The interval 73–95 (QEEAMKKAGADPSEGEGEQPLDP) is disordered. A Cysteine methyl ester modification is found at Cys-279. A lipid anchor (S-farnesyl cysteine) is attached at Cys-279. A propeptide spans 280–282 (SIM) (removed in mature form).

It belongs to the peroxin-19 family.

Its subcellular location is the peroxisome. The chain is Putative peroxisomal biogenesis factor 19 (prx-19) from Caenorhabditis elegans.